Consider the following 90-residue polypeptide: Probable Fe(2+)-trafficking protein (90 aa).

Belongs to the Fe(2+)-trafficking protein family.

Functionally, could be a mediator in iron transactions between iron acquisition and iron-requiring processes, such as synthesis and/or repair of Fe-S clusters in biosynthetic enzymes. This is Probable Fe(2+)-trafficking protein from Vibrio campbellii (strain ATCC BAA-1116).